We begin with the raw amino-acid sequence, 349 residues long: Interferon-stimulated 20 kDa exonuclease-like 2 (349 aa).

Disordered stretches follow at residues Met-1 to Pro-100 and Ala-126 to Gly-166. Positions Pro-14–Ala-23 are enriched in basic and acidic residues. A compositionally biased stretch (basic residues) spans Lys-24–Pro-47. A compositionally biased stretch (basic and acidic residues) spans Leu-54–Arg-66. The segment covering Thr-70–Ser-87 has biased composition (low complexity). The span at Ile-130–Ser-142 shows a compositional bias: basic residues. One can recognise an Exonuclease domain in the interval Met-175–Tyr-331.

The protein localises to the nucleus. The protein resides in the nucleolus. 3'-&gt; 5'-exoribonuclease involved in ribosome biogenesis in the processing of the 12S pre-rRNA. Displays a strong specificity for a 3'-end containing a free hydroxyl group. In Bos taurus (Bovine), this protein is Interferon-stimulated 20 kDa exonuclease-like 2 (ISG20L2).